Reading from the N-terminus, the 515-residue chain is MQDTILEYGGQRSKIPKLWEKFSKKRSPYLDRAKHFAKLTLPYLMNNKGDNETSQNGWQGVGAQATNHLANKLAQVLFPAQRSFFRVDLTAKGEKVLDDRGLKKTQLATIFARVETTAMKALEQRQFRPAIVEVFKHLIVAGNCLLYKPSKGAMSAVPMHHYVVNRDTNGDLMDVILLQEKALRTFDPATRMAIEVGMKGKKCKEDDNVKLYTHAQYAGEGFWKINQSADDIPVGKESRIKSEKLPFIPLTWKRSYGEDWGRPLAEDYSGDLFVIQFLSEAMARGAALMADIKYLIRPGSQTDVDHFVNSGTGEVITGVAEDIHIVQLGKYADLTPISAVLEVYTRRIGVIFMMETMTRRDAERVTAVEIQRDALEIEQNMGGVYSLFAMTMQTPIAMWGLQEAGDSFTSELVDPVIVTGIEALGRMAELDKLANFAQYMSLPQTWPEPAQRAIRWGDYMDWVRGQISAELPFLKSEEEMQQEMAQQAQAQQEAMLNEGVAKAVPGVIQQEMKEG.

It belongs to the podoviridae head-to-tail connector protein family. Homododecamer.

Its subcellular location is the virion. Functionally, forms the portal vertex of the capsid. This portal plays critical roles in head assembly, genome packaging, neck/tail attachment, and genome ejection. The portal protein multimerizes as a single ring-shaped homododecamer arranged around a central channel. The sequence is that of Portal protein from Salmonella typhimurium (Bacteriophage SP6).